We begin with the raw amino-acid sequence, 443 residues long: Regulator of sigma E protease (443 aa).

H21 provides a ligand contact to Zn(2+). The active site involves E22. H25 contributes to the Zn(2+) binding site. A helical transmembrane segment spans residues 98-118; sequence FVIIAGPLANFIFAIFAYWVI. PDZ domains are found at residues 106–185 and 198–287; these read ANFI…SPFN and NWTF…TPVR. 2 helical membrane-spanning segments follow: residues 369–389 and 423–443; these read LVYF…MNLF and IGAA…FLRL.

It belongs to the peptidase M50B family. As to quaternary structure, interacts with RseA. Requires Zn(2+) as cofactor.

The protein localises to the cell inner membrane. Functionally, a site-2 regulated intramembrane protease (S2P) that cleaves a peptide bond in the transmembrane region of RseA. Part of a regulated intramembrane proteolysis (RIP) cascade. Acts on DegS-cleaved RseA to release the cytoplasmic domain of RseA. This provides the cell with sigma-E (RpoE) activity through the proteolysis of RseA. The chain is Regulator of sigma E protease (rsep) from Haemophilus influenzae (strain ATCC 51907 / DSM 11121 / KW20 / Rd).